The chain runs to 225 residues: MADS-box transcription factor 5 (225 aa).

The MADS-box domain occupies 1 to 61 (MGRGKVELKR…GRLFEFSTSS (61 aa)). A K-box domain is found at 89-179 (ELSNYQEYLK…KRKIQETSGE (91 aa)).

In terms of assembly, may interact with the K-box of MADS6.

It localises to the nucleus. Probable transcription factor. The sequence is that of MADS-box transcription factor 5 (MADS5) from Oryza sativa subsp. indica (Rice).